The following is a 392-amino-acid chain: MSKKFTKAVLSAAMAGVLFGVSFDIMAAEQSYSALNAQNGAGSIYKVYYNPDNKTAHIDWGGLGDVEKERNKPIPLLSKIDGNGNVTITSADGSTTFTVYDKEVHDFMKAAASGKTDDIKTNLLTEQNIRDLYNRVSAIQQMETNVGLDEYGNVAVTPNEIKERVSLQRYLAWESANSTIVANELEAQKGKLDAQKGELEAQKKNLGELTTRTDKIDAAAAATAAKVESRTLVGVSSDGTLTRAEGAKNTISVNDGLVALSGRTDRIDAAVGAIDGRVTRNTQSIEKNSKAIAANTRTLQQHSARLDSQQRQINENHKEMKRAAAQSAALTGLFQPYSVGKFNASAAVGGYSDEQALAVGVGYRFNEQTAAKAGVAFSDGDASWNVGVNFEF.

A signal peptide spans 1–27 (MSKKFTKAVLSAAMAGVLFGVSFDIMA). Residues 28–301 (AEQSYSALNA…IAANTRTLQQ (274 aa)) are surface exposed passenger domain. Topologically, residues 28–341 (AEQSYSALNA…GLFQPYSVGK (314 aa)) are extracellular. Residues 174–215 (ESANSTIVANELEAQKGKLDAQKGELEAQKKNLGELTTRTDK) adopt a coiled-coil conformation. The segment at 187–230 (AQKGKLDAQKGELEAQKKNLGELTTRTDKIDAAAAATAAKVESR) is right-handed coiled-coil (RHcc). The segment at 231–256 (TLVGVSSDGTLTRAEGAKNTISVNDG) is saddle domain. Residues 257-322 (LVALSGRTDR…INENHKEMKR (66 aa)) are left-handed coiled-coil (LHcc). Residues 299 to 341 (LQQHSARLDSQQRQINENHKEMKRAAAQSAALTGLFQPYSVGK) are outer membrane translocation of the passenger domain. The next 4 beta stranded transmembrane spans lie at 342–352 (FNASAAVGGYS), 355–366 (QALAVGVGYRFN), 369–378 (TAAKAGVAFS), and 382–392 (ASWNVGVNFEF). Positions 342 to 392 (FNASAAVGGYSDEQALAVGVGYRFNEQTAAKAGVAFSDGDASWNVGVNFEF) are translocator domain.

It belongs to the autotransporter-2 (AT-2) (TC 1.B.40) family. Eib subfamily. In terms of assembly, homotrimer; can probably form mixed heterotrimers in vivo. Will form mixed heterotrimers with EibD; these are correctly located in the outer membrane and bind IgG Fc, although less well than homotrimers. Does not form trimers with distantly related YadA from Y.enterocolitica; coexpression was lethal and one of the genes is eliminated in vivo. If the full translocator domain (299-392) is exchanged with that of YadA ('368-455'), will form heterotrimers with YadA and vice-versa. In denaturing gels runs as 2 bands of about 121 and 131 kDa; extracting the sample with 88% phenol at 70 degrees Celsius reduces part of the signal to about 45 kDa. Binds the Fc portion of IgG; binds more than 1 Fc per subunit.

It is found in the cell surface. The protein localises to the cell outer membrane. Its function is as follows. Binds (in a non-immune fashion) to the Fc portion of human IgG but not IgA; binding occurs on the cell surface. Confers the ability to survive exposure to human serum exposure. Binds to the Fc portion of human IgG and to whole mouse antibodies also via Fc, binds more than 1 Fc or IgG. This Escherichia coli protein is Immunoglobulin-binding protein EibA.